A 265-amino-acid chain; its full sequence is MRMELKMMGNVNKSNKTNEYILRRHKKKRKKKLIIFSILLISILVTLCFKHPFFNVKIVEVKDNKSIKKESIIKSSQISNENNIFYLNLNNVKNNIMSNPYILDAQIKRKLPNKIVIHIKERVALYYIEKDKKFYIIDNNGYVLEKKDNIKNMKLVRVDGIKKKDYNVGEPIFEQGNIRKNFMKNLASLIDKKDNNYEIAIVNIENMNNIQLKYRNIQIIIGDDEDLDKKLNKAFSILLQKEEIRGAKEGYINVSFKGNPVVFIK.

The Cytoplasmic segment spans residues 1-33 (MRMELKMMGNVNKSNKTNEYILRRHKKKRKKKL). Residues 34–54 (IIFSILLISILVTLCFKHPFF) traverse the membrane as a helical segment. A POTRA domain is found at 54 to 122 (FNVKIVEVKD…NKIVIHIKER (69 aa)). Residues 55–265 (NVKIVEVKDN…FKGNPVVFIK (211 aa)) lie on the Extracellular side of the membrane.

Belongs to the FtsQ/DivIB family. DivIB subfamily.

The protein resides in the cell membrane. Functionally, cell division protein that may be involved in stabilizing or promoting the assembly of the division complex. In Clostridium tetani (strain Massachusetts / E88), this protein is Cell division protein DivIB.